Reading from the N-terminus, the 271-residue chain is Protein MGF 360-15R (271 aa).

This sequence belongs to the asfivirus MGF 360 family.

Functionally, plays a role in virus cell tropism, and may be required for efficient virus replication in macrophages. This is Protein MGF 360-15R from African swine fever virus (isolate Tick/Malawi/Lil 20-1/1983) (ASFV).